The sequence spans 237 residues: Sugar fermentation stimulation protein homolog (237 aa).

It belongs to the SfsA family.

The sequence is that of Sugar fermentation stimulation protein homolog from Synechocystis sp. (strain ATCC 27184 / PCC 6803 / Kazusa).